The primary structure comprises 143 residues: Silver-binding protein SilE (143 aa).

The signal sequence occupies residues 1 to 20 (MKNIVLASLLGFGLISSAWA).

The protein to E.coli PcoE.

It localises to the periplasm. In terms of biological role, component of the sil cation-efflux system that confers resistance to silver. The polypeptide is Silver-binding protein SilE (silE) (Salmonella typhimurium).